The sequence spans 458 residues: Flavohemoprotein (458 aa).

Residues 2 to 158 (PLSEDTIKAV…LAHLFVRREE (157 aa)) form the Globin domain. His107 lines the heme b pocket. Residues Tyr117 and Glu157 each act as charge relay system in the active site. Positions 169–457 (GGWRQTRSFR…FEMFGPFKPL (289 aa)) are reductase. In terms of domain architecture, FAD-binding FR-type spans 172–279 (RQTRSFRVEE…APPYGDFFLE (108 aa)). FAD is bound by residues Tyr211 and 228 to 231 (RQYS). An NADP(+)-binding site is contributed by 320 to 325 (GIGQTP). 450–453 (MFGP) lines the FAD pocket.

The protein belongs to the globin family. Two-domain flavohemoproteins subfamily. In the C-terminal section; belongs to the flavoprotein pyridine nucleotide cytochrome reductase family. As to quaternary structure, monomer. Requires heme b as cofactor. It depends on FAD as a cofactor.

It carries out the reaction 2 nitric oxide + NADPH + 2 O2 = 2 nitrate + NADP(+) + H(+). The enzyme catalyses 2 nitric oxide + NADH + 2 O2 = 2 nitrate + NAD(+) + H(+). In terms of biological role, flavohemoprotein involved in nitric oxide (NO) detoxification in an aerobic process, termed nitric oxide dioxygenase (NOD) reaction that utilizes O(2) and NAD(P)H to convert NO to nitrate, which protects the protozoan parasite from various noxious nitrogen compounds. Therefore, plays a central role in the inducible response to nitrosative stress. May also be involved in O(2) detoxification. This Giardia intestinalis (strain ATCC 50581 / GS clone H7) (Giardia lamblia) protein is Flavohemoprotein (hmpA).